The sequence spans 300 residues: Inosose dehydratase (300 aa).

Belongs to the IolE/MocC family. The cofactor is glutathione. It depends on Co(2+) as a cofactor. Requires Mn(2+) as cofactor.

It catalyses the reaction scyllo-inosose = 3D-3,5/4-trihydroxycyclohexane-1,2-dione + H2O. Its pathway is polyol metabolism; myo-inositol degradation into acetyl-CoA; acetyl-CoA from myo-inositol: step 2/7. Functionally, catalyzes the dehydration of inosose (2-keto-myo-inositol, 2KMI or 2,4,6/3,5-pentahydroxycyclohexanone) to 3D-(3,5/4)-trihydroxycyclohexane-1,2-dione (D-2,3-diketo-4-deoxy-epi-inositol). In Lactiplantibacillus plantarum (strain ATCC BAA-793 / NCIMB 8826 / WCFS1) (Lactobacillus plantarum), this protein is Inosose dehydratase.